Consider the following 322-residue polypeptide: tRNA U34 carboxymethyltransferase (322 aa).

Carboxy-S-adenosyl-L-methionine contacts are provided by residues K90, W104, K109, G129, 151 to 153 (DPS), 180 to 181 (IE), M196, Y200, and R315.

Belongs to the class I-like SAM-binding methyltransferase superfamily. CmoB family. Homotetramer.

The catalysed reaction is carboxy-S-adenosyl-L-methionine + 5-hydroxyuridine(34) in tRNA = 5-carboxymethoxyuridine(34) in tRNA + S-adenosyl-L-homocysteine + H(+). Functionally, catalyzes carboxymethyl transfer from carboxy-S-adenosyl-L-methionine (Cx-SAM) to 5-hydroxyuridine (ho5U) to form 5-carboxymethoxyuridine (cmo5U) at position 34 in tRNAs. This chain is tRNA U34 carboxymethyltransferase, found in Cellvibrio japonicus (strain Ueda107) (Pseudomonas fluorescens subsp. cellulosa).